Here is a 156-residue protein sequence, read N- to C-terminus: ATP synthase subunit b (156 aa).

A helical transmembrane segment spans residues Ala-11–Ala-31.

This sequence belongs to the ATPase B chain family. F-type ATPases have 2 components, F(1) - the catalytic core - and F(0) - the membrane proton channel. F(1) has five subunits: alpha(3), beta(3), gamma(1), delta(1), epsilon(1). F(0) has three main subunits: a(1), b(2) and c(10-14). The alpha and beta chains form an alternating ring which encloses part of the gamma chain. F(1) is attached to F(0) by a central stalk formed by the gamma and epsilon chains, while a peripheral stalk is formed by the delta and b chains.

Its subcellular location is the cell inner membrane. In terms of biological role, f(1)F(0) ATP synthase produces ATP from ADP in the presence of a proton or sodium gradient. F-type ATPases consist of two structural domains, F(1) containing the extramembraneous catalytic core and F(0) containing the membrane proton channel, linked together by a central stalk and a peripheral stalk. During catalysis, ATP synthesis in the catalytic domain of F(1) is coupled via a rotary mechanism of the central stalk subunits to proton translocation. Component of the F(0) channel, it forms part of the peripheral stalk, linking F(1) to F(0). This Salmonella gallinarum (strain 287/91 / NCTC 13346) protein is ATP synthase subunit b.